The sequence spans 249 residues: Adenosylcobinamide-GDP ribazoletransferase (249 aa).

A run of 7 helical transmembrane segments spans residues 29–49 (LYWF…CAWL), 50–70 (PLSI…GFIV), 104–124 (VGSF…VAIL), 131–151 (AFAL…LLAA), 165–185 (GFVG…SLMM), 194–214 (PFLL…IGFL), and 226–246 (VLGA…GVAF).

This sequence belongs to the CobS family. Requires Mg(2+) as cofactor.

It localises to the cell inner membrane. The catalysed reaction is alpha-ribazole + adenosylcob(III)inamide-GDP = adenosylcob(III)alamin + GMP + H(+). The enzyme catalyses alpha-ribazole 5'-phosphate + adenosylcob(III)inamide-GDP = adenosylcob(III)alamin 5'-phosphate + GMP + H(+). Its pathway is cofactor biosynthesis; adenosylcobalamin biosynthesis; adenosylcobalamin from cob(II)yrinate a,c-diamide: step 7/7. Its function is as follows. Joins adenosylcobinamide-GDP and alpha-ribazole to generate adenosylcobalamin (Ado-cobalamin). Also synthesizes adenosylcobalamin 5'-phosphate from adenosylcobinamide-GDP and alpha-ribazole 5'-phosphate. The sequence is that of Adenosylcobinamide-GDP ribazoletransferase from Chlorobium phaeovibrioides (strain DSM 265 / 1930) (Prosthecochloris vibrioformis (strain DSM 265)).